Here is a 109-residue protein sequence, read N- to C-terminus: MEPNSPKKIQFAVPVFQSQIAPEAAEQIRKRRPTPASLVILNEHNPPEIDDKRVPNTQGELQNASPKQRKQSVYTPPTIKGVKHLKGQNESAFPEEEEGTNEREEQRDH.

The tract at residues 25–109 (AEQIRKRRPT…TNEREEQRDH (85 aa)) is disordered. A compositionally biased stretch (basic and acidic residues) spans 45-54 (NPPEIDDKRV). Residues 55–75 (PNTQGELQNASPKQRKQSVYT) are compositionally biased toward polar residues. Positions 100–109 (TNEREEQRDH) are enriched in basic and acidic residues.

This sequence belongs to the protein phosphatase inhibitor 1 family.

Its subcellular location is the cytoplasm. In terms of biological role, may increase cell susceptibility to TNF-induced apoptosis. In Pongo abelii (Sumatran orangutan), this protein is Protein phosphatase 1 regulatory subunit 1C (PPP1R1C).